The primary structure comprises 142 residues: Putative pre-16S rRNA nuclease (142 aa).

This sequence belongs to the YqgF nuclease family.

It localises to the cytoplasm. Could be a nuclease involved in processing of the 5'-end of pre-16S rRNA. The sequence is that of Putative pre-16S rRNA nuclease from Chlorobaculum tepidum (strain ATCC 49652 / DSM 12025 / NBRC 103806 / TLS) (Chlorobium tepidum).